Reading from the N-terminus, the 278-residue chain is Movement protein (278 aa).

Residues 256–278 are disordered; the sequence is TLRQEGRDKGDNRRVGVGESPTN. Residues 259 to 271 are compositionally biased toward basic and acidic residues; it reads QEGRDKGDNRRVG.

It belongs to the tobamoviruses movement protein family.

In Vitis vinifera (Grape), this protein is Movement protein.